Reading from the N-terminus, the 475-residue chain is Ribonuclease Y (475 aa).

The tract at residues 34–73 is disordered; it reads EFERESRERRNELQRVERRLMQKEESLDKKSETLEQKDDR. Positions 165–228 constitute a KH domain; that stretch reads TVTVVQLPND…EVARIALEKL (64 aa). Residues 291–384 form the HD domain; sequence VLKHAIEVSH…VTAADAISAA (94 aa).

It belongs to the RNase Y family.

Functionally, endoribonuclease that initiates mRNA decay. This chain is Ribonuclease Y, found in Alkaliphilus metalliredigens (strain QYMF).